Consider the following 298-residue polypeptide: ATP synthase gamma chain (298 aa).

The protein belongs to the ATPase gamma chain family. F-type ATPases have 2 components, CF(1) - the catalytic core - and CF(0) - the membrane proton channel. CF(1) has five subunits: alpha(3), beta(3), gamma(1), delta(1), epsilon(1). CF(0) has three main subunits: a, b and c.

It localises to the cell inner membrane. Its function is as follows. Produces ATP from ADP in the presence of a proton gradient across the membrane. The gamma chain is believed to be important in regulating ATPase activity and the flow of protons through the CF(0) complex. This Desulforapulum autotrophicum (strain ATCC 43914 / DSM 3382 / VKM B-1955 / HRM2) (Desulfobacterium autotrophicum) protein is ATP synthase gamma chain.